The sequence spans 456 residues: tRNA-2-methylthio-N(6)-dimethylallyladenosine synthase (456 aa).

In terms of domain architecture, MTTase N-terminal spans 18–136 (EFFFIQTFGC…FPEYLHRVQV (119 aa)). The [4Fe-4S] cluster site is built by Cys-27, Cys-63, Cys-97, Cys-173, Cys-177, and Cys-180. One can recognise a Radical SAM core domain in the interval 159–391 (RKSNVKAFVT…AVNEGIVVGN (233 aa)). One can recognise a TRAM domain in the interval 392 to 455 (KAAEGKIYEV…SFSLVGEVVE (64 aa)).

It belongs to the methylthiotransferase family. MiaB subfamily. In terms of assembly, monomer. [4Fe-4S] cluster serves as cofactor.

Its subcellular location is the cytoplasm. The catalysed reaction is N(6)-dimethylallyladenosine(37) in tRNA + (sulfur carrier)-SH + AH2 + 2 S-adenosyl-L-methionine = 2-methylsulfanyl-N(6)-dimethylallyladenosine(37) in tRNA + (sulfur carrier)-H + 5'-deoxyadenosine + L-methionine + A + S-adenosyl-L-homocysteine + 2 H(+). Functionally, catalyzes the methylthiolation of N6-(dimethylallyl)adenosine (i(6)A), leading to the formation of 2-methylthio-N6-(dimethylallyl)adenosine (ms(2)i(6)A) at position 37 in tRNAs that read codons beginning with uridine. This chain is tRNA-2-methylthio-N(6)-dimethylallyladenosine synthase, found in Clostridium botulinum (strain Alaska E43 / Type E3).